A 171-amino-acid polypeptide reads, in one-letter code: AP-3 complex subunit sigma (171 aa).

It belongs to the adaptor complexes small subunit family. As to quaternary structure, adaptor protein complex 3 (AP-3) is a heterotetramer composed of two large adaptins (delta-type subunit and beta-type subunit), a medium adaptin (mu-type subunit) and a small adaptin (sigma-type subunit).

It localises to the endosome membrane. Functionally, part of the AP-3 complex, an adaptor-related complex which is essential for the compartmentalization of the endocytic pathway. The sequence is that of AP-3 complex subunit sigma (ap3s1) from Dictyostelium discoideum (Social amoeba).